A 37-amino-acid chain; its full sequence is MKVRTSVKKICSSCKVIRRKGVIGVICTNPKHKQRQA.

The protein belongs to the bacterial ribosomal protein bL36 family.

The protein is Large ribosomal subunit protein bL36 of Leptospira interrogans serogroup Icterohaemorrhagiae serovar Lai (strain 56601).